A 614-amino-acid chain; its full sequence is Phosphomethylpyrimidine synthase (614 aa).

The span at 1–16 (MNAQLSALQQQAQQLS) shows a compositional bias: low complexity. Residues 1 to 36 (MNAQLSALQQQAQQLSESVTRPIPGSRKIHVPGSRP) form a disordered region. Substrate contacts are provided by residues Asn-230, Met-259, Tyr-288, His-324, 344 to 346 (SRG), 385 to 388 (DGLR), and Glu-424. His-428 lines the Zn(2+) pocket. A substrate-binding site is contributed by Tyr-451. Zn(2+) is bound at residue His-492. The [4Fe-4S] cluster site is built by Cys-572, Cys-575, and Cys-580.

It belongs to the ThiC family. Homodimer. [4Fe-4S] cluster is required as a cofactor.

The enzyme catalyses 5-amino-1-(5-phospho-beta-D-ribosyl)imidazole + S-adenosyl-L-methionine = 4-amino-2-methyl-5-(phosphooxymethyl)pyrimidine + CO + 5'-deoxyadenosine + formate + L-methionine + 3 H(+). It functions in the pathway cofactor biosynthesis; thiamine diphosphate biosynthesis. In terms of biological role, catalyzes the synthesis of the hydroxymethylpyrimidine phosphate (HMP-P) moiety of thiamine from aminoimidazole ribotide (AIR) in a radical S-adenosyl-L-methionine (SAM)-dependent reaction. In Stenotrophomonas maltophilia (strain R551-3), this protein is Phosphomethylpyrimidine synthase.